Here is a 139-residue protein sequence, read N- to C-terminus: D-ribose pyranase (139 aa).

The Proton donor role is filled by His20. Residues Asp28, His106, and 128–130 (YAN) contribute to the substrate site.

Belongs to the RbsD / FucU family. RbsD subfamily. In terms of assembly, homodecamer.

The protein resides in the cytoplasm. It catalyses the reaction beta-D-ribopyranose = beta-D-ribofuranose. The protein operates within carbohydrate metabolism; D-ribose degradation; D-ribose 5-phosphate from beta-D-ribopyranose: step 1/2. In terms of biological role, catalyzes the interconversion of beta-pyran and beta-furan forms of D-ribose. The protein is D-ribose pyranase of Actinobacillus pleuropneumoniae serotype 5b (strain L20).